We begin with the raw amino-acid sequence, 248 residues long: Small ribosomal subunit protein uS3 (248 aa).

Residues 39–108 (IRKLVDKKLS…TVAVNVAEIP (70 aa)) form the KH type-2 domain. The segment at 214–248 (ETIARPQRRNDERRPEGGDRANRRRPTARRRAGGE) is disordered. The segment covering 221–234 (RRNDERRPEGGDRA) has biased composition (basic and acidic residues). A compositionally biased stretch (basic residues) spans 235–248 (NRRRPTARRRAGGE).

Belongs to the universal ribosomal protein uS3 family. Part of the 30S ribosomal subunit. Forms a tight complex with proteins S10 and S14.

In terms of biological role, binds the lower part of the 30S subunit head. Binds mRNA in the 70S ribosome, positioning it for translation. This Deinococcus deserti (strain DSM 17065 / CIP 109153 / LMG 22923 / VCD115) protein is Small ribosomal subunit protein uS3.